Reading from the N-terminus, the 315-residue chain is DNA-directed RNA polymerase subunit alpha (315 aa).

The segment at 1–228 (MLEIEKPKIE…EHFKLFMTLT (228 aa)) is alpha N-terminal domain (alpha-NTD). The tract at residues 245-315 (KEKVLEMTIE…LGLSLKLNDE (71 aa)) is alpha C-terminal domain (alpha-CTD).

It belongs to the RNA polymerase alpha chain family. As to quaternary structure, homodimer. The RNAP catalytic core consists of 2 alpha, 1 beta, 1 beta' and 1 omega subunit. When a sigma factor is associated with the core the holoenzyme is formed, which can initiate transcription.

The enzyme catalyses RNA(n) + a ribonucleoside 5'-triphosphate = RNA(n+1) + diphosphate. Its function is as follows. DNA-dependent RNA polymerase catalyzes the transcription of DNA into RNA using the four ribonucleoside triphosphates as substrates. The sequence is that of DNA-directed RNA polymerase subunit alpha from Clostridium acetobutylicum (strain ATCC 824 / DSM 792 / JCM 1419 / IAM 19013 / LMG 5710 / NBRC 13948 / NRRL B-527 / VKM B-1787 / 2291 / W).